Reading from the N-terminus, the 729-residue chain is DNA topoisomerase 3 (729 aa).

In terms of domain architecture, Toprim spans 3 to 136 (KSVVIAEKPS…IKRLWISSVT (134 aa)). Mg(2+) contacts are provided by E9 and D105. Positions 153–594 (YDNLYASAVA…EMKNYTKEIV (442 aa)) constitute a Topo IA-type catalytic domain. The segment at 187–192 (NCGRVQ) is interaction with DNA. Y310 acts as the O-(5'-phospho-DNA)-tyrosine intermediate in catalysis. Over residues 686 to 713 (ERRKKESGNKADKRDVQKYMKQQKKEEE) the composition is skewed to basic and acidic residues. The interval 686–718 (ERRKKESGNKADKRDVQKYMKQQKKEEEPLNNP) is disordered.

This sequence belongs to the type IA topoisomerase family. Requires Mg(2+) as cofactor.

The catalysed reaction is ATP-independent breakage of single-stranded DNA, followed by passage and rejoining.. In terms of biological role, releases the supercoiling and torsional tension of DNA, which is introduced during the DNA replication and transcription, by transiently cleaving and rejoining one strand of the DNA duplex. Introduces a single-strand break via transesterification at a target site in duplex DNA. The scissile phosphodiester is attacked by the catalytic tyrosine of the enzyme, resulting in the formation of a DNA-(5'-phosphotyrosyl)-enzyme intermediate and the expulsion of a 3'-OH DNA strand. The free DNA strand then undergoes passage around the unbroken strand, thus removing DNA supercoils. Finally, in the religation step, the DNA 3'-OH attacks the covalent intermediate to expel the active-site tyrosine and restore the DNA phosphodiester backbone. The polypeptide is DNA topoisomerase 3 (Bacillus cereus (strain ZK / E33L)).